Here is a 1945-residue protein sequence, read N- to C-terminus: Rho GTPase-activating protein 21 (1945 aa).

The tract at residues 26–53 (CEVSKNKDGKDQGEPVSPSEDEPFSWPG) is disordered. Residues 29–38 (SKNKDGKDQG) are compositionally biased toward basic and acidic residues. A phosphoserine mark is found at Ser-42 and Ser-63. The region spanning 56-165 (TVMLKRTSQG…TLELSVMPKD (110 aa)) is the PDZ domain. Disordered stretches follow at residues 210–229 (TAQP…QQTS) and 326–365 (HQTT…DSPP). Residues 347–358 (SGHSEGISSSRS) show a composition bias toward low complexity. A Phosphoserine modification is found at Ser-454. The segment covering 499–512 (EATATVNSESQIPD) has biased composition (polar residues). Positions 499–519 (EATATVNSESQIPDSNGERKQ) are disordered. Omega-N-methylarginine is present on residues Arg-549 and Arg-569. Disordered regions lie at residues 573–647 (PVSQ…RPVN) and 674–702 (EVSS…LELP). Over residues 589 to 600 (SNRNFPTTTGVS) the composition is skewed to polar residues. Ser-610 and Ser-619 each carry phosphoserine. A compositionally biased stretch (polar residues) spans 674 to 696 (EVSSCLPGTSAKTSPQLSENLGT). Thr-741 carries the post-translational modification Phosphothreonine. Phosphoserine is present on residues Ser-851, Ser-856, and Ser-875. Disordered stretches follow at residues 852–879 (HDQE…YDEG) and 902–921 (ITDS…SSSE). Positions 866 to 879 (HSSKTERSKSYDEG) are enriched in basic and acidic residues. Tyr-876 is subject to Phosphotyrosine. Phosphoserine occurs at positions 918, 920, 948, 1093, and 1109. The segment at 924 to 1091 (SDAAREGWLQ…AKSEPKTQSP (168 aa)) is interaction with ARF1 and ARF6. Residues 925 to 1034 (DAAREGWLQF…WIKTIQESSN (110 aa)) enclose the PH domain. The interval 1080 to 1120 (LGAKSEPKTQSPHSPKEESERKLLSKDDTSPPKDKGTWRRG) is disordered. The segment covering 1093-1116 (SPKEESERKLLSKDDTSPPKDKGT) has biased composition (basic and acidic residues). A Rho-GAP domain is found at 1141 to 1333 (VRLDDCPPAH…TLIQHHDWFF (193 aa)). 4 disordered regions span residues 1373–1396 (PGDV…SGKD), 1412–1632 (SRKR…PVFP), 1649–1794 (ARVS…LGGH), and 1846–1945 (RTSA…ETPP). The segment covering 1377–1395 (SDSATSDSAKSKGSWGSGK) has biased composition (low complexity). Phosphoserine occurs at positions 1412, 1426, and 1427. 2 stretches are compositionally biased toward basic and acidic residues: residues 1435 to 1457 (FFKK…RESE) and 1471 to 1488 (SNTK…KIPW). A Glycyl lysine isopeptide (Lys-Gly) (interchain with G-Cter in SUMO) cross-link involves residue Lys-1438. Thr-1504 is subject to Phosphothreonine. 2 stretches are compositionally biased toward low complexity: residues 1531-1556 (SDSG…STSP) and 1569-1589 (TTTS…LDSS). Residues 1579 to 1848 (STTYLTSLDS…WLARERVRTS (270 aa)) are interaction with CTNNA1. A compositionally biased stretch (polar residues) spans 1590–1599 (RLSPEVQSVA). Residues 1611–1621 (SELVSEGRPVE) are compositionally biased toward basic and acidic residues. Phosphoserine is present on Ser-1656. Polar residues-rich tracts occupy residues 1658-1681 (GSEA…QFSS) and 1729-1738 (STGSLLTPSR). Thr-1669 carries the phosphothreonine modification. Ser-1729 is modified (phosphoserine). Basic and acidic residues predominate over residues 1739–1757 (SESEKQEATWKTKIADRLK). Over residues 1782–1792 (RKNIKRRHTLG) the composition is skewed to basic residues. Positions 1871-1882 (PISTHSPPSQQP) are enriched in polar residues. Positions 1887–1896 (AATSTLASTS) are enriched in low complexity. A Phosphothreonine modification is found at Thr-1902. Ser-1906 is modified (phosphoserine). Positions 1907-1927 (PDQINRESFQNMSQNASSTAN) are enriched in polar residues. The span at 1932–1945 (KQSESPDTKAETPP) shows a compositional bias: basic and acidic residues.

In terms of assembly, interacts with CTNNA1. Interacts with GTP-bound ARF1 and probably ARF6. Post-translationally, sumoylated with SUMO2 and SUMO3 in proliferating lymphocytes.

The protein resides in the golgi apparatus membrane. It localises to the cell junction. It is found in the cytoplasmic vesicle membrane. The protein localises to the cytoplasm. Its subcellular location is the cytoskeleton. Its function is as follows. Functions as a GTPase-activating protein (GAP) for RHOA and CDC42. Downstream partner of ARF1 which may control Golgi apparatus structure and function. Also required for CTNNA1 recruitment to adherens junctions. The sequence is that of Rho GTPase-activating protein 21 from Mus musculus (Mouse).